A 566-amino-acid chain; its full sequence is Putative ABC transporter ATP-binding protein BA_2641/GBAA_2641/BAS2461 (566 aa).

2 ABC transporter domains span residues 5–246 (ISFE…GLRE) and 300–533 (LKVE…ANLK). Residues 39-46 (GRSGSGKS) and 333-340 (GHNGAGKS) each bind ATP.

Belongs to the ABC transporter superfamily.

It is found in the cell membrane. Functionally, probably part of an ABC transporter complex. Responsible for energy coupling to the transport system. This chain is Putative ABC transporter ATP-binding protein BA_2641/GBAA_2641/BAS2461, found in Bacillus anthracis.